A 349-amino-acid polypeptide reads, in one-letter code: Small ribosomal subunit biogenesis GTPase RsgA 2 (349 aa).

One can recognise a CP-type G domain in the interval 97-252 (AEQLIATNVD…IIDTPGMREL (156 aa)). GTP is bound by residues 142 to 145 (TKAD) and 194 to 202 (GSSGVGKST). Residues cysteine 275, cysteine 280, histidine 282, and cysteine 288 each coordinate Zn(2+).

This sequence belongs to the TRAFAC class YlqF/YawG GTPase family. RsgA subfamily. In terms of assembly, monomer. Associates with 30S ribosomal subunit, binds 16S rRNA. The cofactor is Zn(2+).

Its subcellular location is the cytoplasm. In terms of biological role, one of several proteins that assist in the late maturation steps of the functional core of the 30S ribosomal subunit. Helps release RbfA from mature subunits. May play a role in the assembly of ribosomal proteins into the subunit. Circularly permuted GTPase that catalyzes slow GTP hydrolysis, GTPase activity is stimulated by the 30S ribosomal subunit. This chain is Small ribosomal subunit biogenesis GTPase RsgA 2, found in Vibrio vulnificus (strain CMCP6).